Consider the following 306-residue polypeptide: MVLSSELLASILAEVRPLLGQGKVADYIPALAQVPADRLGMAVCTVEGELFTAGDAFEPFSIQSISKALSLTLALTLYQEEEIWARVGKEPSGQPFNSLVQLEFEQGIPRNPFINAGALVVSDLLETRLTAPRQRTLELVRRLSGNPAIMADQVVARSEYQHSARNAAIAYLMKAYGNFENEVDKVLQSYFNACAIRMSCVDLARAFIYLANRGVPLGAGEPLLPARTTKQVNALLATCGLYDEAGDFAYRVGMPGKSGVGGGIMALIPGELCVCVWSPELNKAGNSLAGTAALELLAERLGRSIF.

7 residues coordinate substrate: Ser64, Asn115, Glu159, Asn166, Tyr190, Tyr242, and Val260.

It belongs to the glutaminase family. As to quaternary structure, homotetramer.

It carries out the reaction L-glutamine + H2O = L-glutamate + NH4(+). The protein is Glutaminase of Aeromonas salmonicida (strain A449).